Consider the following 318-residue polypeptide: Dual specificity protein phosphatase 2 (318 aa).

The region spanning 27–148 (EAERTLLLDC…FQTYCPDLCS (122 aa)) is the Rhodanese domain. One can recognise a Tyrosine-protein phosphatase domain in the interval 176 to 317 (GPVEILPYLY…LLQLETQVLC (142 aa)). Cys261 functions as the Phosphocysteine intermediate in the catalytic mechanism.

Belongs to the protein-tyrosine phosphatase family. Non-receptor class dual specificity subfamily. As to quaternary structure, interacts with MAPK14; this interaction does not lead to catalytic activation of DUSP2 and dephosphrylation of MAPK14. As to expression, in hematopoietic tissues such as spleen and thymus.

It localises to the nucleus. The enzyme catalyses O-phospho-L-tyrosyl-[protein] + H2O = L-tyrosyl-[protein] + phosphate. It catalyses the reaction O-phospho-L-threonyl-[protein] + H2O = L-threonyl-[protein] + phosphate. Its function is as follows. Dephosphorylates both phosphorylated Thr and Tyr residues in MAPK1, and dephosphorylation of phosphotyrosine is slightly faster than that of phosphothreonine. Can dephosphorylate MAPK1. This chain is Dual specificity protein phosphatase 2, found in Mus musculus (Mouse).